Consider the following 1009-residue polypeptide: Protein translocase subunit SecA (1009 aa).

ATP contacts are provided by residues glutamine 86, 104–108 (GEGKT), and aspartate 497. Disordered stretches follow at residues 869 to 894 (AVPQ…GQQP) and 949 to 1009 (ERRP…RNAG). 2 stretches are compositionally biased toward low complexity: residues 883-894 (PVPAATAPGQQP) and 953-973 (SGAA…AGAG). Cysteine 990, cysteine 992, cysteine 1001, and histidine 1002 together coordinate Zn(2+).

The protein belongs to the SecA family. Monomer and homodimer. Part of the essential Sec protein translocation apparatus which comprises SecA, SecYEG and auxiliary proteins SecDF. Other proteins may also be involved. It depends on Zn(2+) as a cofactor.

Its subcellular location is the cell membrane. The protein localises to the cytoplasm. It carries out the reaction ATP + H2O + cellular proteinSide 1 = ADP + phosphate + cellular proteinSide 2.. Part of the Sec protein translocase complex. Interacts with the SecYEG preprotein conducting channel. Has a central role in coupling the hydrolysis of ATP to the transfer of proteins into and across the cell membrane, serving as an ATP-driven molecular motor driving the stepwise translocation of polypeptide chains across the membrane. The chain is Protein translocase subunit SecA from Acidothermus cellulolyticus (strain ATCC 43068 / DSM 8971 / 11B).